The primary structure comprises 437 residues: Eukaryotic peptide chain release factor subunit 1 (437 aa).

An N-acetylalanine modification is found at alanine 2. The NIKS motif; plays an important role in translational termination signature appears at 61 to 64; sequence NIKS. Lysine 63 is modified (4-hydroxylysine). A Glycyl lysine isopeptide (Lys-Gly) (interchain with G-Cter in SUMO2) cross-link involves residue lysine 87. N5-methylglutamine is present on glutamine 185. Threonine 347 carries the phosphothreonine modification. A Glycyl lysine isopeptide (Lys-Gly) (interchain with G-Cter in SUMO2) cross-link involves residue lysine 404.

This sequence belongs to the eukaryotic release factor 1 family. In terms of assembly, component of the eRF1-eRF3-GTP ternary complex, composed of ETF1/ERF1 and eRF3 (GSPT1/ERF3A or GSPT2/ERF3B) and GTP. Component of the transient SURF (SMG1-UPF1-eRF1-eRF3) complex. Interacts with JMJD4. The ETF1-GSPT1 complex interacts with JMJD4. Hydroxylation at Lys-63 by JMJD4 promotes its translational termination efficiency. In terms of processing, methylated at Gln-185 by N6AMT1. Post-translationally, ubiquitinated via 'Lys-6'-linked polyubiquitin chains by RNF14 and RNF25 in response to ribosome collisions (ribosome stalling), leading to its degradation by the proteasome and rescue of stalled ribosomes.

It localises to the cytoplasm. Functionally, component of the eRF1-eRF3-GTP ternary complex, a ternary complex that mediates translation termination in response to the termination codons. The eRF1-eRF3-GTP complex binds to a stop codon in the ribosomal A-site. ETF1/ERF1 is responsible for stop codon recognition and inducing hydrolysis of peptidyl-tRNA. Following GTP hydrolysis, eRF3 (GSPT1/ERF3A or GSPT2/ERF3B) dissociates, permitting ETF1/eRF1 to accommodate fully in the A-site, followed by hydrolysis of peptidyl-tRNA. Component of the transient SURF complex which recruits UPF1 to stalled ribosomes in the context of nonsense-mediated decay (NMD) of mRNAs containing premature stop codons. Required for SHFL-mediated translation termination which inhibits programmed ribosomal frameshifting (-1PRF) of mRNA from viruses and cellular genes. This is Eukaryotic peptide chain release factor subunit 1 (ETF1) from Pongo abelii (Sumatran orangutan).